The primary structure comprises 442 residues: Tubulin beta chain (442 aa).

Residues Gln11, Glu69, Ser138, Gly142, Thr143, Gly144, Asn204, and Asn226 each contribute to the GTP site. Glu69 contacts Mg(2+). A disordered region spans residues 421–442 (EYQQYQDATAEDEEEMDEEQME). The segment covering 429 to 442 (TAEDEEEMDEEQME) has biased composition (acidic residues).

Belongs to the tubulin family. As to quaternary structure, dimer of alpha and beta chains. A typical microtubule is a hollow water-filled tube with an outer diameter of 25 nm and an inner diameter of 15 nM. Alpha-beta heterodimers associate head-to-tail to form protofilaments running lengthwise along the microtubule wall with the beta-tubulin subunit facing the microtubule plus end conferring a structural polarity. Microtubules usually have 13 protofilaments but different protofilament numbers can be found in some organisms and specialized cells. The cofactor is Mg(2+).

It is found in the cytoplasm. The protein resides in the cytoskeleton. Its function is as follows. Tubulin is the major constituent of microtubules, a cylinder consisting of laterally associated linear protofilaments composed of alpha- and beta-tubulin heterodimers. Microtubules grow by the addition of GTP-tubulin dimers to the microtubule end, where a stabilizing cap forms. Below the cap, tubulin dimers are in GDP-bound state, owing to GTPase activity of alpha-tubulin. This is Tubulin beta chain (TUBB1) from Stylonychia lemnae (Ciliate).